The sequence spans 420 residues: Glutamyl-tRNA reductase (420 aa).

Residues 49–52, serine 109, 114–116, and glutamine 120 each bind substrate; these read TCNR and EPQ. The active-site Nucleophile is cysteine 50. Residue 189 to 194 participates in NADP(+) binding; it reads GAGETI.

The protein belongs to the glutamyl-tRNA reductase family. In terms of assembly, homodimer.

The enzyme catalyses (S)-4-amino-5-oxopentanoate + tRNA(Glu) + NADP(+) = L-glutamyl-tRNA(Glu) + NADPH + H(+). The protein operates within porphyrin-containing compound metabolism; protoporphyrin-IX biosynthesis; 5-aminolevulinate from L-glutamyl-tRNA(Glu): step 1/2. Its function is as follows. Catalyzes the NADPH-dependent reduction of glutamyl-tRNA(Glu) to glutamate 1-semialdehyde (GSA). The protein is Glutamyl-tRNA reductase of Proteus mirabilis (strain HI4320).